The sequence spans 505 residues: Aspartyl/glutamyl-tRNA(Asn/Gln) amidotransferase subunit B (505 aa).

It belongs to the GatB/GatE family. GatB subfamily. As to quaternary structure, heterotrimer of A, B and C subunits.

It carries out the reaction L-glutamyl-tRNA(Gln) + L-glutamine + ATP + H2O = L-glutaminyl-tRNA(Gln) + L-glutamate + ADP + phosphate + H(+). The enzyme catalyses L-aspartyl-tRNA(Asn) + L-glutamine + ATP + H2O = L-asparaginyl-tRNA(Asn) + L-glutamate + ADP + phosphate + 2 H(+). Functionally, allows the formation of correctly charged Asn-tRNA(Asn) or Gln-tRNA(Gln) through the transamidation of misacylated Asp-tRNA(Asn) or Glu-tRNA(Gln) in organisms which lack either or both of asparaginyl-tRNA or glutaminyl-tRNA synthetases. The reaction takes place in the presence of glutamine and ATP through an activated phospho-Asp-tRNA(Asn) or phospho-Glu-tRNA(Gln). The sequence is that of Aspartyl/glutamyl-tRNA(Asn/Gln) amidotransferase subunit B from Kineococcus radiotolerans (strain ATCC BAA-149 / DSM 14245 / SRS30216).